The chain runs to 410 residues: 2-hydroxy-5-methyl-1-naphthoate 7-hydroxylase (410 aa).

C350 lines the heme pocket.

The protein belongs to the cytochrome P450 family. Heme serves as cofactor.

The catalysed reaction is 2-hydroxy-5-methyl-1-naphthoate + 2 reduced [2Fe-2S]-[ferredoxin] + O2 + 2 H(+) = 2,7-dihydroxy-5-methyl-1-naphthoate + 2 oxidized [2Fe-2S]-[ferredoxin] + H2O. It functions in the pathway antibiotic biosynthesis. Functionally, involved in the biosynthesis of the naphthoic acid (NA) moiety in the chromophore of the enedyine antitumor antibiotic neocarzinostatin (NCS). Catalyzes the hydroxylation at C-7 position of 2-hydroxy-5-methyl-1-naphthoate to yield 2,7-dihydroxy-5-methyl-1-naphthoate. The protein is 2-hydroxy-5-methyl-1-naphthoate 7-hydroxylase of Streptomyces carzinostaticus.